Consider the following 425-residue polypeptide: Bifunctional phosphoribosylaminoimidazole carboxylase/phosphoribosylaminoimidazole succinocarboxamide synthetase (425 aa).

Ala-2 bears the N-acetylalanine mark. Residues 2 to 260 (ATAEVLNIGR…WVADRVELLL (259 aa)) form an SAICAR synthetase domain region. The residue at position 22 (Tyr-22) is a Phosphotyrosine. At Ser-27 the chain carries Phosphoserine. Lys-36 bears the N6-acetyllysine mark. The residue at position 107 (Ser-107) is a Phosphoserine. Thr-238 bears the Phosphothreonine mark. The residue at position 247 (Lys-247) is an N6-acetyllysine. Residues 261-266 (KSNSQC) are linker. An AIR carboxylase domain region spans residues 267–425 (RVVVLMGSTS…ADKKIRECNL (159 aa)). Ser-274 carries the phosphoserine modification. Ser-332 serves as a coordination point for CO2.

This sequence in the N-terminal section; belongs to the SAICAR synthetase family. The protein in the C-terminal section; belongs to the AIR carboxylase family. Class II subfamily. Homooctamer.

It catalyses the reaction 5-amino-1-(5-phospho-D-ribosyl)imidazole-4-carboxylate + L-aspartate + ATP = (2S)-2-[5-amino-1-(5-phospho-beta-D-ribosyl)imidazole-4-carboxamido]succinate + ADP + phosphate + 2 H(+). The enzyme catalyses 5-amino-1-(5-phospho-D-ribosyl)imidazole-4-carboxylate + H(+) = 5-amino-1-(5-phospho-beta-D-ribosyl)imidazole + CO2. It participates in purine metabolism; IMP biosynthesis via de novo pathway; 5-amino-1-(5-phospho-D-ribosyl)imidazole-4-carboxamide from 5-amino-1-(5-phospho-D-ribosyl)imidazole-4-carboxylate: step 1/2. Its pathway is purine metabolism; IMP biosynthesis via de novo pathway; 5-amino-1-(5-phospho-D-ribosyl)imidazole-4-carboxylate from 5-amino-1-(5-phospho-D-ribosyl)imidazole (carboxylase route): step 1/1. Its function is as follows. Bifunctional phosphoribosylaminoimidazole carboxylase and phosphoribosylaminoimidazole succinocarboxamide synthetase catalyzing two reactions of the de novo purine biosynthetic pathway. The sequence is that of Bifunctional phosphoribosylaminoimidazole carboxylase/phosphoribosylaminoimidazole succinocarboxamide synthetase from Rattus norvegicus (Rat).